The following is a 216-amino-acid chain: uncharacterized protein (216 aa).

The Integrase catalytic domain maps to 54 to 215 (TATQPNEKWT…SPVNYRTQSL (162 aa)).

Belongs to the transposase IS3/IS150/IS904 family.

This is an uncharacterized protein from Haemophilus influenzae (strain ATCC 51907 / DSM 11121 / KW20 / Rd).